The following is a 348-amino-acid chain: Dihydroorotase (348 aa).

Positions 17 and 19 each coordinate Zn(2+). Substrate is bound by residues 19 to 21 (HLR) and Asn45. Zn(2+) contacts are provided by Lys103, His140, and His178. N6-carboxylysine is present on Lys103. His140 contacts substrate. Position 223 (Leu223) interacts with substrate. Asp251 contributes to the Zn(2+) binding site. Asp251 is an active-site residue. Positions 255 and 267 each coordinate substrate.

This sequence belongs to the metallo-dependent hydrolases superfamily. DHOase family. Class II DHOase subfamily. As to quaternary structure, homodimer. The cofactor is Zn(2+).

It carries out the reaction (S)-dihydroorotate + H2O = N-carbamoyl-L-aspartate + H(+). It functions in the pathway pyrimidine metabolism; UMP biosynthesis via de novo pathway; (S)-dihydroorotate from bicarbonate: step 3/3. Catalyzes the reversible cyclization of carbamoyl aspartate to dihydroorotate. The polypeptide is Dihydroorotase (Escherichia coli O6:H1 (strain CFT073 / ATCC 700928 / UPEC)).